An 83-amino-acid chain; its full sequence is MSGSTGERSFADIITSIRYWVIHSITIPSLFIAGWLFVSTGLAYDVFGSPRPNEYFTENRQGIPLITGRFDPLEQLDEFSRSF.

The helical transmembrane segment at 21 to 35 (VIHSITIPSLFIAGW) threads the bilayer. His23 contacts heme.

The protein belongs to the PsbE/PsbF family. As to quaternary structure, heterodimer of an alpha subunit and a beta subunit. PSII is composed of 1 copy each of membrane proteins PsbA, PsbB, PsbC, PsbD, PsbE, PsbF, PsbH, PsbI, PsbJ, PsbK, PsbL, PsbM, PsbT, PsbX, PsbY, PsbZ, Psb30/Ycf12, at least 3 peripheral proteins of the oxygen-evolving complex and a large number of cofactors. It forms dimeric complexes. The cofactor is heme b.

The protein resides in the plastid. The protein localises to the chloroplast thylakoid membrane. Functionally, this b-type cytochrome is tightly associated with the reaction center of photosystem II (PSII). PSII is a light-driven water:plastoquinone oxidoreductase that uses light energy to abstract electrons from H(2)O, generating O(2) and a proton gradient subsequently used for ATP formation. It consists of a core antenna complex that captures photons, and an electron transfer chain that converts photonic excitation into a charge separation. This is Cytochrome b559 subunit alpha from Daucus carota (Wild carrot).